The primary structure comprises 129 residues: Phenazine antibiotic resistance protein EhpR (129 aa).

Residues 10 to 128 (TPNLQLVYVS…DGHIIRVCPL (119 aa)) enclose the VOC domain. Residues 42–43 (RY) and W57 contribute to the D-alanylgriseoluteate site.

Homodimer.

Required for resistance to the phenazine antibiotic D-alanylgriseoluteic acid (AGA), an antibiotic produced by E.agglomerans itself, and thus protects the bacterium against phenazine toxicity. Probably binds AGA and acts as a chaperone that works in tandem with a membrane transporter for subsequent antibiotic secretion. This Enterobacter agglomerans (Erwinia herbicola) protein is Phenazine antibiotic resistance protein EhpR.